Consider the following 1088-residue polypeptide: MGKYNLILSEYLSFVYNSQSAVQIPIYYSSNSELEKRCIEFHAKCVDSSKKGLSLKPLFEEYKDVIDNATLLSILSYSYDKYNAVERKLVNYAKGKPLEADLTANEIDYENNKITSELFQSAEEYTDSLMDPAILTSLSSNLNAVMFWLERHSNDVADANKIYKRRLDLFTIVASTINKYGVPRHNEKYRYEYEVMKDKPYYLVTWANSSIEMLMSVFSHEDYLIAKELIILSYSNRSTLAKLVSSPMSILVALIDINGTFITNEELELEFSDKYVKAIVPDQIFDELQEMIDNMRKAGLVDIPRMIQEWLVDCSLEKFTLMSKIYSWSFHVGFRKQKMIDAALDQLKTEYTEDVDGEMYNEYTMLIRDEIVKMLEVPVKHDDHLLRDSELAGLLSMSSASNGESRQLKFGRKTIFSTKKNMHVMDDIAHGRYTPGVIPPVNVDRPIPLGRRDVPGRRTRIIFILPYEYFIAQHAVVEKMLSYAKHTREYAEFYSQSNQLLSYGDVTRFLSSNSMVLYTDVSQWDSSQHNTQPFRKGIIMGLDMLSNMTNDPKVVQTLNLYKQTQINLMDSYVQIPDGNVIKKIQYGAVASGEKQTKAANSIANLALIKTVLSRIANKYSFITKIIRVDGDDNYAVLQFNTDVTKQMVQDVSNDVRYIYSRMNAKVKALVSTVGIEIAKRYIAGGKIFFRAGINLLNNEKRGQSTQWDQAAILYSNYIVNKLRGFETDREFILTKIIQMTSVAITGSLRLFPSERVLTTNSTFKVFDSEDFIIEYGTTNDEVYIQRAFMSLSSQKSGIADEIASSQTFKNYVNKLSDQLLISKNVIVSKGIAVTEKAKLNSYAPVYLEKRRAQISALLTMLQKPVSFKSNKITINDILRDIKPFFITSEANLPIQYRKFMPTLPNNVQYVIQCIGSRTYQIEDSGSKSSISKLISKYSVYKPSIEELYKVISLREQEIQLYLVSLGVPPVDAGTYVGSRIYSQDKYKILESYVYNLLSINYGCYQLFNFNSPDLEKLIRIPFKGKIPAVTFILHLYAKLEIINYAIKNGAWISLFCNYPKSEMIKLWKKMWNITALRSPYTSANFFQD.

The region spanning 501 to 687 is the RdRp catalytic domain; sequence LSYGDVTRFL…AKRYIAGGKI (187 aa).

It belongs to the reoviridae RNA-directed RNA polymerase family. Interacts with VP3 (Potential). Interacts with VP2; this interaction activates VP1. Interacts with NSP5; this interaction is probably necessary for the formation of functional virus factories. Interacts with NSP2; this interaction is weak. The cofactor is Mg(2+).

The protein resides in the virion. It carries out the reaction RNA(n) + a ribonucleoside 5'-triphosphate = RNA(n+1) + diphosphate. RNA-directed RNA polymerase that is involved in both transcription and genome replication. Together with VP3 capping enzyme, forms an enzyme complex positioned near the channels situated at each of the five-fold vertices of the core. Following infection, the outermost layer of the virus is lost, leaving a double-layered particle (DLP) made up of the core and VP6 shell. VP1 then catalyzes the transcription of fully conservative plus-strand genomic RNAs that are extruded through the DLP's channels into the cytoplasm where they function as mRNAs for translation of viral proteins. One copy of each of the viral (+)RNAs is also recruited during core assembly, together with newly synthesized polymerase complexes and VP2. The polymerase of these novo-formed particles catalyzes the synthesis of complementary minus-strands leading to dsRNA formation. To do so, the polymerase specifically recognizes and binds 4 bases 5'-UGUG-3' in the conserved 3'-sequence of plus-strand RNA templates. VP2 presumably activates the autoinhibited VP1-RNA complex to coordinate packaging and genome replication. Once dsRNA synthesis is complete, the polymerase switches to the transcriptional mode, thus providing secondary transcription. This chain is RNA-directed RNA polymerase, found in Rotavirus A (strain RVA/Human/United States/Wa/1974/G1P1A[8]) (RV-A).